The primary structure comprises 281 residues: UPF0750 membrane protein YvjA (281 aa).

Helical transmembrane passes span 14-34 (YVYILIGAAITAVSFNVFLLP), 56-76 (AAYVQWIINIPLFIAGVILLG), 77-97 (GKFGLKTLAGSVFLPLVVFLT), 108-128 (LLAAIFGGVGIGIGIGIVYLG), and 149-169 (SLGKCLAIIDGMIVVTAMIVF).

Belongs to the UPF0750 family.

The protein localises to the cell membrane. The polypeptide is UPF0750 membrane protein YvjA (yvjA) (Bacillus subtilis (strain 168)).